An 877-amino-acid chain; its full sequence is Putative ankyrin repeat protein R748 (877 aa).

6 ANK repeats span residues 44-74, 79-109, 115-145, 202-231, 243-272, and 282-311; these read IRHI…TINV, QNNT…NINY, IGIS…AIQQ, MGYR…SINE, NNND…PIHM, and LVPT…SIQA. The disordered stretch occupies residues 525–579; that stretch reads DSDEDPVCDSNESDNSNDINNHVKSDNKLNSSNDYYDEDDSEDNYNNQSDDEPLV. Low complexity predominate over residues 533–544; the sequence is DSNESDNSNDIN.

The chain is Putative ankyrin repeat protein R748 from Acanthamoeba polyphaga mimivirus (APMV).